The chain runs to 410 residues: 2-oxoisovalerate dehydrogenase subunit alpha (410 aa).

It belongs to the BCKDHA family. As to quaternary structure, heterodimer of an alpha and a beta chain. It depends on thiamine diphosphate as a cofactor.

The enzyme catalyses N(6)-[(R)-lipoyl]-L-lysyl-[protein] + 3-methyl-2-oxobutanoate + H(+) = N(6)-[(R)-S(8)-2-methylpropanoyldihydrolipoyl]-L-lysyl-[protein] + CO2. The branched-chain alpha-keto dehydrogenase complex catalyzes the overall conversion of alpha-keto acids to acyl-CoA and CO(2). It contains multiple copies of three enzymatic components: branched-chain alpha-keto acid decarboxylase (E1), lipoamide acyltransferase (E2) and lipoamide dehydrogenase (E3). This Pseudomonas aeruginosa (strain ATCC 15692 / DSM 22644 / CIP 104116 / JCM 14847 / LMG 12228 / 1C / PRS 101 / PAO1) protein is 2-oxoisovalerate dehydrogenase subunit alpha (bkdA1).